The chain runs to 447 residues: Dihydrolipoyllysine-residue acetyltransferase component of pyruvate dehydrogenase complex (447 aa).

The Lipoyl-binding domain occupies 2–78 (PINITMPALS…KVNALIAVLA (77 aa)). Residue Lys43 is modified to N6-lipoyllysine. Residues 91–140 (GNGAAGAVPAPKPKETAETAPAAAPAPAAAPAPQAAAPASPAPADGEGKR) are disordered. A compositionally biased stretch (low complexity) spans 108 to 134 (ETAPAAAPAPAAAPAPQAAAPASPAPA). The Peripheral subunit-binding (PSBD) domain maps to 142 to 179 (FSSPLARRLAKEAGIDLSAIAGSGPHGRVVKKDVETAV). His420 is a catalytic residue.

Belongs to the 2-oxoacid dehydrogenase family. Forms a 24-polypeptide structural core with octahedral symmetry. Requires (R)-lipoate as cofactor.

The catalysed reaction is N(6)-[(R)-dihydrolipoyl]-L-lysyl-[protein] + acetyl-CoA = N(6)-[(R)-S(8)-acetyldihydrolipoyl]-L-lysyl-[protein] + CoA. The pyruvate dehydrogenase complex catalyzes the overall conversion of pyruvate to acetyl-CoA and CO(2). It contains multiple copies of three enzymatic components: pyruvate dehydrogenase (E1), dihydrolipoamide acetyltransferase (E2) and lipoamide dehydrogenase (E3). This Rhizobium meliloti (strain 1021) (Ensifer meliloti) protein is Dihydrolipoyllysine-residue acetyltransferase component of pyruvate dehydrogenase complex (pdhC).